The chain runs to 249 residues: Transmembrane protein 106C (249 aa).

The interval 1 to 26 (MGSRHSTYAHRPFSKRRKADDTEDSL) is disordered. G2 is lipidated: N-myristoyl glycine. Helical transmembrane passes span 86–106 (YVLL…FFLF) and 197–217 (SYVY…VVFV).

This sequence belongs to the TMEM106 family. In terms of assembly, interacts with TMEM106B.

Its subcellular location is the endoplasmic reticulum membrane. It localises to the membrane. The chain is Transmembrane protein 106C (TMEM106C) from Bos taurus (Bovine).